Consider the following 702-residue polypeptide: Vertnin (702 aa).

The segment at 562-625 (VPTLGKGGQE…QGQPHSGPLL (64 aa)) is disordered. A compositionally biased stretch (basic and acidic residues) spans 570–582 (QEAEEKQEKEAGR).

Belongs to the vertnin family.

The protein resides in the nucleus. Acts as a transcription factor that regulates development of thoracic vertebrae. In Homo sapiens (Human), this protein is Vertnin.